Here is a 264-residue protein sequence, read N- to C-terminus: Vacuolar protein sorting-associated protein 75 (264 aa).

At Ser-3 the chain carries Phosphoserine. The tract at residues 223–264 is disordered; it reads LEDEEGESGLSADGDSEDDDGSLGEVDLPLSDEEPSSKKRKV.

The protein belongs to the nucleosome assembly protein (NAP) family. In terms of assembly, homodimer. Homotetramer. Forms a complex with RTT109; consisting of a VPS75 dimer contacted by two RTT109 subunits. Interacts with RTT109; the interaction is direct. Interacts with ASF1. Interacts with histone H3/H4 heterodimers and heterotetramers via histone H3.

Its subcellular location is the nucleus. Histone chaperone which acts as a cofactor stimulating histone H3 acetylation by RTT109. Preferentially stimulates histone H3 'Lys-9' acetylation by RTT109. May also stimulate histone H3 'Lys-56' acetylation by RTT109. Assembles nucleosomes (in vitro). The sequence is that of Vacuolar protein sorting-associated protein 75 (VPS75) from Saccharomyces cerevisiae (strain ATCC 204508 / S288c) (Baker's yeast).